Consider the following 249-residue polypeptide: Cytokine-inducible SH2-containing protein (249 aa).

The segment at 41–64 (AFPEEPAPTFAAPEPDGSAPQTRD) is disordered. Residues 84–165 (WYWGSITASE…PDVVSLIQHY (82 aa)) enclose the SH2 domain. Positions 200-248 (KLLRPLGRRDSIPSLQHLCRLRINRCTTEVERLPLPRRMGDYLKQYPFQ) constitute an SOCS box domain.

It participates in protein modification; protein ubiquitination. Functionally, SOCS family proteins form part of a classical negative feedback system that regulates cytokine signal transduction. CIS is involved in the negative regulation of cytokines that signal through the JAK-STAT5 pathway such as erythropoietin, prolactin and interleukin 3 (IL3) receptor. Inhibits STAT5 trans-activation by suppressing its tyrosine phosphorylation. May be a substrate-recognition component of a SCF-like ECS (Elongin BC-CUL2/5-SOCS-box protein) E3 ubiquitin-protein ligase complex which mediates the ubiquitination and subsequent proteasomal degradation of target proteins. The chain is Cytokine-inducible SH2-containing protein (CISH) from Gallus gallus (Chicken).